The chain runs to 196 residues: Pyridoxal 5'-phosphate synthase subunit PdxT (196 aa).

47-49 provides a ligand contact to L-glutamine; sequence GES. The Nucleophile role is filled by C79. L-glutamine-binding positions include R106 and 134–135; that span reads IR. Active-site charge relay system residues include H170 and E172.

It belongs to the glutaminase PdxT/SNO family. In the presence of PdxS, forms a dodecamer of heterodimers. Only shows activity in the heterodimer.

It catalyses the reaction aldehydo-D-ribose 5-phosphate + D-glyceraldehyde 3-phosphate + L-glutamine = pyridoxal 5'-phosphate + L-glutamate + phosphate + 3 H2O + H(+). It carries out the reaction L-glutamine + H2O = L-glutamate + NH4(+). Its pathway is cofactor biosynthesis; pyridoxal 5'-phosphate biosynthesis. Catalyzes the hydrolysis of glutamine to glutamate and ammonia as part of the biosynthesis of pyridoxal 5'-phosphate. The resulting ammonia molecule is channeled to the active site of PdxS. This is Pyridoxal 5'-phosphate synthase subunit PdxT from Bacillus cereus (strain ZK / E33L).